The following is a 411-amino-acid chain: Argininosuccinate synthase (411 aa).

ATP-binding positions include 13-21 (AYSGGLDTS) and Ala40. Positions 91 and 96 each coordinate L-citrulline. Gly121 contributes to the ATP binding site. Thr123, Asn127, and Asp128 together coordinate L-aspartate. Asn127 contacts L-citrulline. Positions 131, 182, 191, 267, and 279 each coordinate L-citrulline.

Belongs to the argininosuccinate synthase family. Type 1 subfamily. In terms of assembly, homotetramer.

The protein localises to the cytoplasm. It carries out the reaction L-citrulline + L-aspartate + ATP = 2-(N(omega)-L-arginino)succinate + AMP + diphosphate + H(+). It functions in the pathway amino-acid biosynthesis; L-arginine biosynthesis; L-arginine from L-ornithine and carbamoyl phosphate: step 2/3. The chain is Argininosuccinate synthase from Bartonella tribocorum (strain CIP 105476 / IBS 506).